A 175-amino-acid polypeptide reads, in one-letter code: Protein-export protein SecB (175 aa).

Polar residues predominate over residues 153 to 163 (QQQPDAANGND). The disordered stretch occupies residues 153-175 (QQQPDAANGNDSGIILPPGATRQ).

It belongs to the SecB family. Homotetramer, a dimer of dimers. One homotetramer interacts with 1 SecA dimer.

The protein resides in the cytoplasm. One of the proteins required for the normal export of preproteins out of the cell cytoplasm. It is a molecular chaperone that binds to a subset of precursor proteins, maintaining them in a translocation-competent state. It also specifically binds to its receptor SecA. The chain is Protein-export protein SecB from Bordetella bronchiseptica (strain ATCC BAA-588 / NCTC 13252 / RB50) (Alcaligenes bronchisepticus).